The sequence spans 347 residues: Protein RecA (347 aa).

68-75 is an ATP binding site; sequence GPESSGKT.

Belongs to the RecA family.

The protein localises to the cytoplasm. Its function is as follows. Can catalyze the hydrolysis of ATP in the presence of single-stranded DNA, the ATP-dependent uptake of single-stranded DNA by duplex DNA, and the ATP-dependent hybridization of homologous single-stranded DNAs. It interacts with LexA causing its activation and leading to its autocatalytic cleavage. The protein is Protein RecA of Nocardia farcinica (strain IFM 10152).